A 201-amino-acid chain; its full sequence is 3-isopropylmalate dehydratase small subunit (201 aa).

The protein belongs to the LeuD family. LeuD type 1 subfamily. Heterodimer of LeuC and LeuD.

It carries out the reaction (2R,3S)-3-isopropylmalate = (2S)-2-isopropylmalate. The protein operates within amino-acid biosynthesis; L-leucine biosynthesis; L-leucine from 3-methyl-2-oxobutanoate: step 2/4. Functionally, catalyzes the isomerization between 2-isopropylmalate and 3-isopropylmalate, via the formation of 2-isopropylmaleate. The chain is 3-isopropylmalate dehydratase small subunit from Micrococcus luteus (strain ATCC 4698 / DSM 20030 / JCM 1464 / CCM 169 / CCUG 5858 / IAM 1056 / NBRC 3333 / NCIMB 9278 / NCTC 2665 / VKM Ac-2230) (Micrococcus lysodeikticus).